A 27-amino-acid polypeptide reads, in one-letter code: HVVAAITALKERGGSSHQALKKYKAAN.

The H15 domain occupies 1 to 27; the sequence is HVVAAITALKERGGSSHQALKKYKAAN.

Belongs to the histone H1/H5 family.

Its subcellular location is the nucleus. It localises to the chromosome. Its function is as follows. Histones H1 are necessary for the condensation of nucleosome chains into higher-order structures. This chain is Histone H1.3, embryonic, found in Parechinus angulosus (Angulate sea urchin).